The sequence spans 105 residues: Heat shock protein HspQ (105 aa).

This sequence belongs to the HspQ family.

The protein resides in the cytoplasm. Involved in the degradation of certain denaturated proteins, including DnaA, during heat shock stress. The chain is Heat shock protein HspQ from Salmonella choleraesuis (strain SC-B67).